The following is a 432-amino-acid chain: MAPSYQKSEEMFEQAQRIIPGGVNSPVRAFKSVGMNPPFIARANGSRMWDVDGNEYIDYICSWGPQILGHRHPAVIHALQDCLEKGTTYGAPTDLEVTLAQMLTEALPSVEMVRMVNSGTEATMSALRLARAYTNRSKIIKFEGCYHGHHDSLLIKAGSGALTHGVPTSPGVPENIASNTINARYNDLELLEKIFTEVGSDIAAIIVEPLAGNMGVVPPAEGFLQGLRDLCNKHSALLIFDEVITGFRLSYGGAQAYYNVMPDLTCLGKIIGGGLPVGAYGGRREIMQMVSPAGPVYQAGTLSGNPLAMTAGIATLKQLQQPGVYEELDYKSDLLAQGLIQAAKAAGVEASFNRVQSLQTCFFTQQDVRDFATASSSDTKQYAAFFRNMLEQGIYLAPAQFEATFVSLAHTENDIERTVEAAFNAFRAAAKE.

Residue Lys-269 is modified to N6-(pyridoxal phosphate)lysine.

It belongs to the class-III pyridoxal-phosphate-dependent aminotransferase family. HemL subfamily. Homodimer. It depends on pyridoxal 5'-phosphate as a cofactor.

The protein resides in the cytoplasm. It catalyses the reaction (S)-4-amino-5-oxopentanoate = 5-aminolevulinate. The protein operates within porphyrin-containing compound metabolism; protoporphyrin-IX biosynthesis; 5-aminolevulinate from L-glutamyl-tRNA(Glu): step 2/2. The protein is Glutamate-1-semialdehyde 2,1-aminomutase of Desulforamulus reducens (strain ATCC BAA-1160 / DSM 100696 / MI-1) (Desulfotomaculum reducens).